We begin with the raw amino-acid sequence, 237 residues long: rRNA-processing protein EFG1 (237 aa).

The tract at residues 1–24 is disordered; that stretch reads MPKTVKNPKNNKSRSRGAPIQVAE. 2 coiled-coil regions span residues 53 to 113 and 166 to 186; these read DKKI…ISQT and LKIT…LMEE. Positions 206-237 are disordered; it reads NDKTQKAVLTEEIDAPEQKQDEQQEEQDDFFE. Residues 228–237 show a composition bias toward acidic residues; it reads QQEEQDDFFE.

This sequence belongs to the EFG1 family.

Its subcellular location is the nucleus. It is found in the nucleolus. Involved in rRNA processing. The chain is rRNA-processing protein EFG1 from Candida albicans (strain SC5314 / ATCC MYA-2876) (Yeast).